Consider the following 184-residue polypeptide: Photosystem I assembly protein Ycf4 (184 aa).

The next 2 membrane-spanning stretches (helical) occupy residues 19–39 (ISNF…LLVG) and 57–77 (IIFF…LFIS).

The protein belongs to the Ycf4 family.

The protein localises to the plastid. It is found in the chloroplast thylakoid membrane. Its function is as follows. Seems to be required for the assembly of the photosystem I complex. The sequence is that of Photosystem I assembly protein Ycf4 from Drimys granadensis.